The following is an 880-amino-acid chain: Pentatricopeptide repeat-containing protein At3g07290, mitochondrial (880 aa).

A mitochondrion-targeting transit peptide spans 1–89; it reads MLLIHIRSTR…RSDNDICVRF (89 aa). PPR repeat units lie at residues 159 to 193, 194 to 228, 229 to 259, 265 to 299, 300 to 334, 335 to 369, 370 to 404, 405 to 439, 440 to 474, 475 to 509, 510 to 544, 545 to 579, 580 to 614, 615 to 649, 650 to 684, 685 to 721, 738 to 768, 772 to 806, and 807 to 842; these read NYPC…GFVV, GMID…GFVL, DSHI…MSKE, NSVS…GCQP, STRT…GCKP, NVHT…RIFP, SVIT…ACKP, NVRT…GLSP, DIVS…DIEP, DCLT…GISL, DEVT…RILT, TPHS…GLVP, SVVT…GCLP, NVYP…GVSP, NHVT…GYEL, NDRI…ETDP, ISGL…VLER, LEKA…GFVP, and SFKS…GVVE.

Belongs to the PPR family. P subfamily.

Its subcellular location is the mitochondrion. This is Pentatricopeptide repeat-containing protein At3g07290, mitochondrial from Arabidopsis thaliana (Mouse-ear cress).